A 136-amino-acid chain; its full sequence is MSSVYRPLVNFIATAMQTVLNLGLLCLGIILIVFLGKETLHLADVLFTPEPTSKYRLVEGLVVYFLYFEFIALIVKYFQSGFHFPLRYFVYIGITAIVRLIIIDHESPMAVLIYSAAILILVITLWLCNSNRLKRE.

The next 4 helical transmembrane spans lie at 15 to 35 (AMQTVLNLGLLCLGIILIVFL), 58 to 78 (VEGLVVYFLYFEFIALIVKYF), 83 to 103 (HFPLRYFVYIGITAIVRLIII), and 108 to 128 (PMAVLIYSAAILILVITLWLC).

Belongs to the PsiE family.

The protein localises to the cell inner membrane. The polypeptide is Protein PsiE homolog (Klebsiella pneumoniae (strain 342)).